Consider the following 309-residue polypeptide: tRNA dimethylallyltransferase (309 aa).

Gly-11–Ser-18 is a binding site for ATP. Thr-13–Ser-18 contributes to the substrate binding site. Interaction with substrate tRNA stretches follow at residues Asp-36–Gln-39 and Gln-160–Arg-164.

This sequence belongs to the IPP transferase family. Monomer. The cofactor is Mg(2+).

The catalysed reaction is adenosine(37) in tRNA + dimethylallyl diphosphate = N(6)-dimethylallyladenosine(37) in tRNA + diphosphate. Its function is as follows. Catalyzes the transfer of a dimethylallyl group onto the adenine at position 37 in tRNAs that read codons beginning with uridine, leading to the formation of N6-(dimethylallyl)adenosine (i(6)A). The protein is tRNA dimethylallyltransferase of Rickettsia felis (strain ATCC VR-1525 / URRWXCal2) (Rickettsia azadi).